A 342-amino-acid polypeptide reads, in one-letter code: MAGSGGLGGGAGDLQGAGTGQGTALRALRAPLALVVLLLSAYCLFALPGRCPPAARAPAPVPAPAEPPHTSLRLRAPGLPVASGPGRRRFPQALIVGVKKGGTRALLEFLRLHPDVRALGSEPHFFDRCYDRGLAWYRGLMPRTLDGQITMEKTPSYFVTQEAPRRIHGMSPDTKLIVVVRNPVTRAISDYAQTLSKTPGLPSFRALAFRHGLGPVDTAWSAVRIGLYAQHLDNWLRYFPLSHFLFVSGERLVSDPAGEVGRVQDFLGLKRVVTDKHFYFNATKGFPCLKKAQGSGRPRCLGKSKGRPHPRVPEAVVQRLQAFYRPFNRKFYQMTGQDFGWD.

Residues 1–31 (MAGSGGLGGGAGDLQGAGTGQGTALRALRAP) lie on the Cytoplasmic side of the membrane. A helical; Signal-anchor for type II membrane protein membrane pass occupies residues 32–49 (LALVVLLLSAYCLFALPG). Topologically, residues 50-342 (RCPPAARAPA…QMTGQDFGWD (293 aa)) are lumenal. The tract at residues 56-75 (RAPAPVPAPAEPPHTSLRLR) is disordered. 100 to 104 (KGGTR) lines the 3'-phosphoadenylyl sulfate pocket. Substrate contacts are provided by residues 122-128 (EPHFFDR) and 153-156 (KTPS). 3'-phosphoadenylyl sulfate contacts are provided by arginine 181 and serine 189. 220 to 221 (WS) contacts substrate. A glycan (N-linked (GlcNAc...) asparagine) is linked at asparagine 281. Cysteine 288 and cysteine 300 are disulfide-bonded. Residue 305 to 309 (KGRPH) coordinates 3'-phosphoadenylyl sulfate.

Belongs to the sulfotransferase 1 family. In terms of tissue distribution, expressed in liver and kidney, followed by heart, brain, lung and testis.

Its subcellular location is the golgi apparatus membrane. It catalyses the reaction alpha-D-glucosaminyl-[heparan sulfate](n) + 3'-phosphoadenylyl sulfate = 3-sulfo-alpha-D-glucosaminyl-[heparan sulfate](n) + adenosine 3',5'-bisphosphate + H(+). Its function is as follows. Sulfotransferase that utilizes 3'-phospho-5'-adenylyl sulfate (PAPS) to catalyze the transfer of a sulfo group to heparan sulfate. Unlike 3-OST-1, does not convert non-anticoagulant heparan sulfate to anticoagulant heparan sulfate. The sequence is that of Heparan sulfate glucosamine 3-O-sulfotransferase 6 (Hs3st6) from Mus musculus (Mouse).